Here is a 128-residue protein sequence, read N- to C-terminus: Ribonuclease P protein component (128 aa).

This sequence belongs to the RnpA family. Consists of a catalytic RNA component (M1 or rnpB) and a protein subunit.

The enzyme catalyses Endonucleolytic cleavage of RNA, removing 5'-extranucleotides from tRNA precursor.. Its function is as follows. RNaseP catalyzes the removal of the 5'-leader sequence from pre-tRNA to produce the mature 5'-terminus. It can also cleave other RNA substrates such as 4.5S RNA. The protein component plays an auxiliary but essential role in vivo by binding to the 5'-leader sequence and broadening the substrate specificity of the ribozyme. The sequence is that of Ribonuclease P protein component from Prochlorococcus marinus (strain MIT 9215).